Consider the following 166-residue polypeptide: MSGSHTAIAPLAPCMEGLPPLPKSLSGLLNSSGGSGWRDLERVYAQKSRIQDDLSRGGTSGSVQAHPKPPNLDAALALLRKEMVGLRQLDMSLLCQLYSLYESIQEYKGACQAASSADCTYAMENGFFDEEEEYYQEAGSLHKIGRENSEGTVSPISNEDWILENI.

This sequence belongs to the FAM89 family.

The polypeptide is Protein FAM89A (fam89a) (Xenopus laevis (African clawed frog)).